The primary structure comprises 323 residues: Transposase for insertion sequence element IS6120 (323 aa).

The disordered stretch occupies residues 300–323 (ERPTDITPPTSPSDGGQHAGTEVA). The span at 304–313 (DITPPTSPSD) shows a compositional bias: low complexity.

It belongs to the transposase mutator family.

Required for the transposition of the insertion element. This chain is Transposase for insertion sequence element IS6120, found in Mycolicibacterium smegmatis (Mycobacterium smegmatis).